Consider the following 61-residue polypeptide: MINIFSFICIYLHSALYSSSFFFGKLPEAYAFLNPIVDVMPVIPLFFFLLAFVWQAAVSFR.

The propeptide occupies 1 to 24 (MINIFSFICIYLHSALYSSSFFFG). The chain crosses the membrane as a helical span at residues 40 to 60 (MPVIPLFFFLLAFVWQAAVSF).

This sequence belongs to the PsbK family. PSII is composed of 1 copy each of membrane proteins PsbA, PsbB, PsbC, PsbD, PsbE, PsbF, PsbH, PsbI, PsbJ, PsbK, PsbL, PsbM, PsbT, PsbX, PsbY, PsbZ, Psb30/Ycf12, at least 3 peripheral proteins of the oxygen-evolving complex and a large number of cofactors. It forms dimeric complexes.

It is found in the plastid. The protein localises to the chloroplast thylakoid membrane. Functionally, one of the components of the core complex of photosystem II (PSII). PSII is a light-driven water:plastoquinone oxidoreductase that uses light energy to abstract electrons from H(2)O, generating O(2) and a proton gradient subsequently used for ATP formation. It consists of a core antenna complex that captures photons, and an electron transfer chain that converts photonic excitation into a charge separation. The chain is Photosystem II reaction center protein K from Pelargonium hortorum (Common geranium).